The sequence spans 269 residues: Extracellular metalloprotease UREG_07765 (269 aa).

An N-terminal signal peptide occupies residues 1–18 (MRLSVSLLALAFGSLVAA). A glycan (N-linked (GlcNAc...) asparagine) is linked at asparagine 179. Zn(2+) is bound at residue histidine 191. Glutamate 192 is an active-site residue. Residue histidine 195 coordinates Zn(2+). A disordered region spans residues 207 to 227 (VSDTPPQRSSTQGCPSSRDSC). A compositionally biased stretch (polar residues) spans 210–225 (TPPQRSSTQGCPSSRD). Cysteine 220 and cysteine 246 form a disulfide bridge.

The protein belongs to the peptidase M43B family.

The protein localises to the secreted. In terms of biological role, secreted metalloproteinase that allows assimilation of proteinaceous substrates. In Uncinocarpus reesii (strain UAMH 1704), this protein is Extracellular metalloprotease UREG_07765.